Here is a 209-residue protein sequence, read N- to C-terminus: Small ribosomal subunit protein uS4 (209 aa).

One can recognise an S4 RNA-binding domain in the interval 98-161 (TRLDNVVYRM…AKQLRVQEAL (64 aa)).

This sequence belongs to the universal ribosomal protein uS4 family. As to quaternary structure, part of the 30S ribosomal subunit. Contacts protein S5. The interaction surface between S4 and S5 is involved in control of translational fidelity.

Its function is as follows. One of the primary rRNA binding proteins, it binds directly to 16S rRNA where it nucleates assembly of the body of the 30S subunit. In terms of biological role, with S5 and S12 plays an important role in translational accuracy. The sequence is that of Small ribosomal subunit protein uS4 from Stenotrophomonas maltophilia (strain R551-3).